The primary structure comprises 536 residues: ATP synthase subunit alpha, mitochondrial (536 aa).

The N-terminal 24 residues, 1-24 (MFKNALRRAGVAAPRISRVAQRGY), are a transit peptide targeting the mitochondrion. 195–202 (GDRQTGKT) provides a ligand contact to ATP.

As to quaternary structure, F-type ATP synthases have 2 components, the catalytic core F(1) and the membrane-embedded component F(0), linked together by a central stalk and a peripheral stalk. The central stalk, also called rotor shaft, is often seen as part of F(1). The peripheral stalk is seen as part of F(0). F(0) contains the membrane channel next to the rotor. F-type ATP synthases form dimers but each monomer functions independently in ATP generation. The dimer consists of 17 different polypeptides: ATP1 (subunit alpha, 3 molecules per monomer, part of F(1)), ATP2 (subunit beta, 3 copies per monomer, part of F(1)), ATP3 (subunit gamma, part of the central stalk), ATP4 (subunit b, part of the peripheral stalk), ATP5/OSCP (subunit 5/OSCP, part of the peripheral stalk), ATP6 (subunit a, part of the peripheral stalk), ATP7 (subunit d, part of the peripheral stalk), ATP8 (subunit 8, part of the peripheral stalk), OLI1 (subunit c, part of the rotor, 10 molecules per monomer), ATP14 (subunit h, part of the peripheral stalk), ATP15 (subunit epsilon, part of the central stalk), ATP16 (subunit delta, part of the central stalk), ATP17 (subunit f, part of the peripheral stalk), ATP18 (subunit i/j, part of the peripheral stalk), ATP19 (subunit k, dimer-specific, at interface between monomers), ATP20 (subunit g, at interface between monomers), TIM11 (subunit e, at interface between monomers).

It is found in the mitochondrion inner membrane. In terms of biological role, mitochondrial membrane ATP synthase (F(1)F(0) ATP synthase or Complex V) produces ATP from ADP in the presence of a proton gradient across the membrane which is generated by electron transport complexes of the respiratory chain. F-type ATP synthases consist of two structural domains, F(1) - containing the extramembraneous catalytic core, and F(0) - containing the membrane proton channel, linked together by a central stalk and a peripheral stalk. During catalysis, ATP synthesis in the catalytic domain of F(1) is coupled via a rotary mechanism of the central stalk subunits to proton translocation. Subunits alpha/ATP1 and beta/ATP2 form the catalytic core in F(1). Rotation of the central stalk against the surrounding alpha/ATP1(3)beta/ATP2(3) subunits leads to hydrolysis of ATP in three separate catalytic sites on the beta/ATP2 subunits. Subunit alpha/ATP1 does not bear the catalytic high-affinity ATP-binding sites. The chain is ATP synthase subunit alpha, mitochondrial from Yarrowia lipolytica (strain CLIB 122 / E 150) (Yeast).